Here is a 376-residue protein sequence, read N- to C-terminus: Glutamate 5-kinase (376 aa).

Lys16 lines the ATP pocket. Substrate-binding residues include Ser56, Asp143, and Asn155. Residue 175-176 (TD) participates in ATP binding. The PUA domain occupies 283–361 (RGALSLDEGA…RDIETTLGYV (79 aa)).

Belongs to the glutamate 5-kinase family.

It is found in the cytoplasm. It carries out the reaction L-glutamate + ATP = L-glutamyl 5-phosphate + ADP. It functions in the pathway amino-acid biosynthesis; L-proline biosynthesis; L-glutamate 5-semialdehyde from L-glutamate: step 1/2. In terms of biological role, catalyzes the transfer of a phosphate group to glutamate to form L-glutamate 5-phosphate. The sequence is that of Glutamate 5-kinase from Halorhodospira halophila (strain DSM 244 / SL1) (Ectothiorhodospira halophila (strain DSM 244 / SL1)).